The sequence spans 487 residues: N-succinylglutamate 5-semialdehyde dehydrogenase (487 aa).

The tract at residues 1-23 is disordered; it reads MTHFIKGQWQAGKGHDVTSSNPA. 220 to 225 provides a ligand contact to NAD(+); sequence GSSRTG. Residues E243 and C277 contribute to the active site.

This sequence belongs to the aldehyde dehydrogenase family. AstD subfamily.

It catalyses the reaction N-succinyl-L-glutamate 5-semialdehyde + NAD(+) + H2O = N-succinyl-L-glutamate + NADH + 2 H(+). Its pathway is amino-acid degradation; L-arginine degradation via AST pathway; L-glutamate and succinate from L-arginine: step 4/5. Its function is as follows. Catalyzes the NAD-dependent reduction of succinylglutamate semialdehyde into succinylglutamate. The chain is N-succinylglutamate 5-semialdehyde dehydrogenase from Shewanella sp. (strain ANA-3).